The primary structure comprises 376 residues: Cytochrome b (376 aa).

4 consecutive transmembrane segments (helical) span residues 28–48 (YGFLLGIIFFIQILTGVFLAS), 72–94 (WCFRYMHATGASLVFFLTYLHIL), 107–127 (SWISGLIIFALFIVTAFIGYV), and 169–189 (FFVLHFILPFVALCIVFIHIF). Positions 78 and 92 each coordinate heme b. Heme b contacts are provided by histidine 173 and histidine 187. Histidine 192 is a binding site for a ubiquinone. 4 consecutive transmembrane segments (helical) span residues 214–234 (LLSLDVKGFNNILILFLIQSI), 274–294 (IPSKNAGLVIVIASLQLLFLL), 317–337 (VPIIWFMCSFYALLWIGCPLP), and 340–360 (IFILYGRLFIILFFSSGLFSL).

Belongs to the cytochrome b family. In terms of assembly, the main subunits of complex b-c1 are: cytochrome b, cytochrome c1 and the Rieske protein. Heme b is required as a cofactor.

Its subcellular location is the mitochondrion inner membrane. Its function is as follows. Component of the ubiquinol-cytochrome c reductase complex (complex III or cytochrome b-c1 complex) that is part of the mitochondrial respiratory chain. The b-c1 complex mediates electron transfer from ubiquinol to cytochrome c. Contributes to the generation of a proton gradient across the mitochondrial membrane that is then used for ATP synthesis. This chain is Cytochrome b (MT-CYB), found in Plasmodium berghei.